Reading from the N-terminus, the 282-residue chain is MKVIHTIKDLQAELSVLKAQGKKVGLVPTMGALHAGHASLVKRSVNENEVTVVSVFVNPTQFNDKNDLVKYPRTLDADCKLLEACGATYAFAPSVEEMYPEPDTRQFSYAPLDTVMEGAFRPGHFNGVCQIVSKLFEAVKPHRAYFGEKDFQQLAIIREMVRQMQFDLEIVGCPIVREEDGLALSSRNARLSAEERENALKISQTLFKSRTFAATHTVSETLKFVEDAIAAVPGLRLEYFEIVDGNTLQKVDNWNQTSYVVGCITVFCGDVRLIDNIKYKES.

30 to 37 (MGALHAGH) contacts ATP. The active-site Proton donor is the histidine 37. Glutamine 61 serves as a coordination point for (R)-pantoate. Glutamine 61 is a binding site for beta-alanine. 147–150 (GEKD) is a binding site for ATP. Glutamine 153 provides a ligand contact to (R)-pantoate. Residues valine 176 and 184 to 187 (LSSR) each bind ATP.

Belongs to the pantothenate synthetase family. Homodimer.

Its subcellular location is the cytoplasm. The enzyme catalyses (R)-pantoate + beta-alanine + ATP = (R)-pantothenate + AMP + diphosphate + H(+). The protein operates within cofactor biosynthesis; (R)-pantothenate biosynthesis; (R)-pantothenate from (R)-pantoate and beta-alanine: step 1/1. Catalyzes the condensation of pantoate with beta-alanine in an ATP-dependent reaction via a pantoyl-adenylate intermediate. The protein is Pantothenate synthetase of Bacteroides fragilis (strain ATCC 25285 / DSM 2151 / CCUG 4856 / JCM 11019 / LMG 10263 / NCTC 9343 / Onslow / VPI 2553 / EN-2).